Consider the following 102-residue polypeptide: Co-chaperonin GroES (102 aa).

Belongs to the GroES chaperonin family. In terms of assembly, heptamer of 7 subunits arranged in a ring. Interacts with the chaperonin GroEL.

It localises to the cytoplasm. Together with the chaperonin GroEL, plays an essential role in assisting protein folding. The GroEL-GroES system forms a nano-cage that allows encapsulation of the non-native substrate proteins and provides a physical environment optimized to promote and accelerate protein folding. GroES binds to the apical surface of the GroEL ring, thereby capping the opening of the GroEL channel. The protein is Co-chaperonin GroES of Streptomyces avermitilis (strain ATCC 31267 / DSM 46492 / JCM 5070 / NBRC 14893 / NCIMB 12804 / NRRL 8165 / MA-4680).